A 504-amino-acid chain; its full sequence is MEKFQSYLGLDRSHYFLYPLIFQEYIYVLAHDHGLNGSILLENAGYDNKSSLLIVKRLIIRMYQQNHLILSVNDSKQTPFWGHNKNFYSQVMSEVSSTIMEIPLSLRLISSLERKGVVKSDNLRSIHSIFSFLEDNFSHLNYVLDILIPYPAHLEILVQALRYWIKDASSLHLLRFFLYECHNRDSLITSNSKKACSSFSKRNHRLFCFLYTSYLCEYESGFLFLRNQSSHLRSTSSGALIERIYFYGKIEHLAEVFAGAFQANFWLFKDSFMHYVRYQGKSILASKGTFLLMNKWKYYFVNFWKSSFYLWSHPGGIYINQLSNHSLDFLGYRSSVRLKPSMVRGQMLENTFLIDNAIKKFDSLVPIMPLVGSLAKSKFCNALGHPIGKAIWTDLSDSDIIERFGRIYRKLSHYHSGSSKKKGLYRVKYILRLSCARTLARKHKSTVRAFLKRFGSQLLEEFFTEEEQVFPLTFPRVSSISRRLSRRRIWYLDIVCINDLVNHE.

It belongs to the intron maturase 2 family. MatK subfamily.

The protein resides in the plastid. Its subcellular location is the chloroplast. Its function is as follows. Usually encoded in the trnK tRNA gene intron. Probably assists in splicing its own and other chloroplast group II introns. This Wollastonia biflora (Beach sunflower) protein is Maturase K.